Consider the following 285-residue polypeptide: Probable endonuclease 4 (285 aa).

Residues histidine 67, histidine 107, glutamate 144, aspartate 177, histidine 180, histidine 214, aspartate 227, histidine 229, and glutamate 259 each coordinate Zn(2+).

It belongs to the AP endonuclease 2 family. The cofactor is Zn(2+).

It carries out the reaction Endonucleolytic cleavage to 5'-phosphooligonucleotide end-products.. Functionally, endonuclease IV plays a role in DNA repair. It cleaves phosphodiester bonds at apurinic or apyrimidinic (AP) sites, generating a 3'-hydroxyl group and a 5'-terminal sugar phosphate. The protein is Probable endonuclease 4 of Persephonella marina (strain DSM 14350 / EX-H1).